We begin with the raw amino-acid sequence, 72 residues long: uncharacterized protein (72 aa).

This is an uncharacterized protein from Vaccinia virus (strain Western Reserve) (VACV).